Here is a 474-residue protein sequence, read N- to C-terminus: PRAME family member 2 (474 aa).

An LRR 1; degenerate repeat occupies 97–124 (RWKLQVLDLRDVDENFWARWPGAWALSC). The LRR 2; degenerate repeat unit spans residues 179 to 203 (HLCCSKLVNYLTPIKYLRKSLKIIY). One copy of the LRR 3; degenerate repeat lies at 204–230 (INSIGELEIHNTCWPHLIRKLYCYLKE). The stretch at 231-265 (MKTLCKLVFSRCHHYTSDNELEGWLVTRFTSVFLR) is one LRR 4; degenerate repeat. LRR repeat units lie at residues 266-291 (LEHLQLLKIKLITFFSGHLEQLIRCL), 292-323 (QNPLENLELTCGNLLEEDLKCLSQFPSLGYLK), 324-342 (HLNLSYVLLFRISLEPLGA), 348-375 (AASLETLVLEGCQIHYSQLSAILPGLSC), and 376-400 (CSQLTTFYFGSNCMSIDALKDLLRH).

The protein belongs to the PRAME family.

This is PRAME family member 2 from Homo sapiens (Human).